A 105-amino-acid polypeptide reads, in one-letter code: Translation initiation factor 1A (105 aa).

The S1-like domain occupies 12–87 (TRVRTPREEN…QKCDIIWRYT (76 aa)).

This sequence belongs to the eIF-1A family.

Functionally, seems to be required for maximal rate of protein biosynthesis. Enhances ribosome dissociation into subunits and stabilizes the binding of the initiator Met-tRNA(I) to 40 S ribosomal subunits. This is Translation initiation factor 1A (eIF1A) from Methanococcus aeolicus (strain ATCC BAA-1280 / DSM 17508 / OCM 812 / Nankai-3).